We begin with the raw amino-acid sequence, 774 residues long: MWIQVRTMDGKETHTVNSLSRLTKVQELRKKIEELFHVEPQLQRLFYRGKQMEDGHTLFDYDVRLNDTIQLLVRQSLALPLSTKERDSELSDSDSGYGVGHSESDKSSTHGEGTADGDDKTVWEDTDLGLYKVNEYVDVRDNIFGAWFEAQVVQVQKKALSEEEPCSSSAIMAPEDDIMYHIKYDDYPEHGVDIVKAKNVRARARTVIPWEDLEVGQVVMANYNVDYPRKRGFWYDVEICRKRQTRTARELYGNVMLLNDSQLNNCRIIFVDEVLKIELPNERSPLIGSPSRRKSGPSCQYCKDDENKPCRKCACHICGGREAPEKQVLCDECDMAFHLYCLQPPLTCVPPEPEWYCPSCRTDSSEVVQAGEKLKKSKKKAKMASATSSSRRDWGKGMACVGRTTECTIVPANHFGPIPGVPVGTMWRFRVQVSESGVHRPHVAGIHGRSNDGAYSLVLAGGYEDDVDNGNFFTYTGSGGRDLSGNKRTAGQSSDQKLTNNNRALALNCHSPINEKGAEAEDWRQGKPVRVVRNMKGGKHSKYAPAEGNRYDGIYKVVKYWPEKGKSGFIVWRYLLRRDDTEPEPWTREGKDRTRQLGLTMQYPEGYLEALANKEKNRKRPAKALEQGPSSSKIGKSKRKSTGPATTSPRVSKKSKLEPYTLPLQQANLIKEDKGNAKLWDDVLSSLQDGPYQIFLSKVKEAFQCICCQELVFRPVTTVCQHNVCKDCLDRSFRAQVFSCPACRYDLDHSSPTRVNQPLQTILNQLFPGYGSGR.

The Ubiquitin-like domain occupies 1-78 (MWIQVRTMDG…IQLLVRQSLA (78 aa)). Phosphoserine occurs at positions 76, 91, 93, 95, and 161. Residues 83-120 (TKERDSELSDSDSGYGVGHSESDKSSTHGEGTADGDDK) are disordered. Tudor-like stretches follow at residues 129–205 (GLYK…ARAR) and 212–280 (DLEV…IELP). A Glycyl lysine isopeptide (Lys-Gly) (interchain with G-Cter in SUMO2) cross-link involves residue lysine 276. A Phosphoserine modification is found at serine 284. The interval 293–298 (RKSGPS) is linker. A Phosphoserine; by PKA modification is found at serine 295. The PHD-type zinc-finger motif lies at 296 to 363 (GPSCQYCKDD…EWYCPSCRTD (68 aa)). Histone H3R2me0 binding regions lie at residues 330–334 (CDECD) and 350–352 (PPE). The residue at position 365 (serine 365) is a Phosphoserine. Lysine 382 participates in a covalent cross-link: Glycyl lysine isopeptide (Lys-Gly) (interchain with G-Cter in SUMO2). The tract at residues 382-605 (KMASATSSSR…QLGLTMQYPE (224 aa)) is methyl-CpG binding and interaction with HDAC1. An N6-acetyllysine modification is found at lysine 396. The region spanning 416–578 (GPIPGVPVGT…FIVWRYLLRR (163 aa)) is the YDG domain. Positions 442 to 443 (HV) are required to promote base flipping. Residues 460-461 (AG) and aspartate 466 contribute to the DNA site. Required for formation of a 5-methylcytosine-binding pocket regions lie at residues 463-466 (YEDD) and 475-478 (YTGS). Position 511 is a phosphoserine (serine 511). The residue at position 542 (lysine 542) is an N6-acetyllysine; alternate. Residue lysine 542 forms a Glycyl lysine isopeptide (Lys-Gly) (interchain with G-Cter in SUMO2); alternate linkage. Positions 616-657 (KNRKRPAKALEQGPSSSKIGKSKRKSTGPATTSPRVSKKSKL) are disordered. At serine 631 the chain carries Phosphoserine; by CDK1. Serine 641 and serine 648 each carry phosphoserine. A Glycyl lysine isopeptide (Lys-Gly) (interchain with G-Cter in SUMO2) cross-link involves residue lysine 656. Residues 705–744 (CICCQELVFRPVTTVCQHNVCKDCLDRSFRAQVFSCPACR) form an RING-type zinc finger. Serine 751 carries the phosphoserine modification.

As to quaternary structure, interacts with DNMT3A and DNMT3B. Interacts with DNMT1; the interaction is direct. Interacts with USP7; leading to its deubiquitination. Interacts with histone H3. Interacts with HDAC1, but not with HDAC2. Interacts with BLTP3A. Interacts with PML. Interacts with EHMT2. Binds methylated CpG containing oligonucleotides. Interacts with ZNF263; recruited to the SIX3 promoter along with other proteins involved in chromatin modification and transcriptional corepression where it contributes to transcriptional repression. Interacts with UHRF2. Interacts with FANCD2. Interacts with TET1 isoform 2; this interaction induces the recruitment of TET1 isoform 2 to replicating heterochromatin. Phosphorylation at Ser-295 of the linker region decreases the binding to H3K9me3. Phosphorylation at Ser-631 by CDK1 during M phase impairs interaction with USP7, preventing deubiquitination and leading to degradation by the proteasome. In terms of processing, ubiquitinated; which leads to proteasomal degradation. Autoubiquitinated; interaction with USP7 leads to deubiquitination and prevents degradation. Ubiquitination and degradation takes place during M phase, when phosphorylation at Ser-631 prevents interaction with USP7 and subsequent deubiquitination. Polyubiquitination may be stimulated by DNA damage.

Its subcellular location is the nucleus. The enzyme catalyses S-ubiquitinyl-[E2 ubiquitin-conjugating enzyme]-L-cysteine + [acceptor protein]-L-lysine = [E2 ubiquitin-conjugating enzyme]-L-cysteine + N(6)-ubiquitinyl-[acceptor protein]-L-lysine.. It participates in protein modification; protein ubiquitination. In terms of biological role, multidomain protein that acts as a key epigenetic regulator by bridging DNA methylation and chromatin modification. Specifically recognizes and binds hemimethylated DNA at replication forks via its YDG domain and recruits DNMT1 methyltransferase to ensure faithful propagation of the DNA methylation patterns through DNA replication. In addition to its role in maintenance of DNA methylation, also plays a key role in chromatin modification: through its tudor-like regions and PHD-type zinc fingers, specifically recognizes and binds histone H3 trimethylated at 'Lys-9' (H3K9me3) and unmethylated at 'Arg-2' (H3R2me0), respectively, and recruits chromatin proteins. Enriched in pericentric heterochromatin where it recruits different chromatin modifiers required for this chromatin replication. Also localizes to euchromatic regions where it negatively regulates transcription possibly by impacting DNA methylation and histone modifications. Has E3 ubiquitin-protein ligase activity by mediating the ubiquitination of target proteins such as histone H3 and PML. It is still unclear how E3 ubiquitin-protein ligase activity is related to its role in chromatin in vivo. Plays a role in DNA repair by cooperating with UHRF2 to ensure recruitment of FANCD2 to interstrand cross-links (ICLs) leading to FANCD2 activation. Plays a pivotal role in the establishment of correct spindle architecture by catalyzing the 'Lys-63'-linked ubiquitination of KIF11, thereby controlling KIF11 localization on the spindle. The protein is E3 ubiquitin-protein ligase UHRF1 (Uhrf1) of Rattus norvegicus (Rat).